The sequence spans 408 residues: Probable E3 ubiquitin-protein ligase makorin-1 (408 aa).

2 C3H1-type zinc fingers span residues 34–61 (WTRH…HDLA) and 63–90 (SRSA…HNKP). Disordered stretches follow at residues 90-114 (PLQE…SGNI) and 154-173 (EAYT…PADP). Residues 162–173 (KPDEGREEPADP) show a composition bias toward basic and acidic residues. The C3H1-type 3 zinc finger occupies 174-201 (ELKKQLCPYAAMGECRYGENCVYLHGDP). The interval 202 to 229 (CDMCGLQVLHPVDTCQRSQHIKSCIEAH) is makorin-type Cys-His. The RING-type zinc finger occupies 247–301 (CGICMEVVYEKTNPSERRFGILSNCSHSYCLKCIRKWRSAKQFESKIIKSCPECR). The C3H1-type 4 zinc finger occupies 330–359 (AMSSKSCRYFDEGRGTCPFGGNCFYRHAYP). The segment at 363–408 (IEEPQPRQKSGMSSRYRIPSPSAGIDFGSLTSERAETRLRTRKTKL) is disordered.

It catalyses the reaction S-ubiquitinyl-[E2 ubiquitin-conjugating enzyme]-L-cysteine + [acceptor protein]-L-lysine = [E2 ubiquitin-conjugating enzyme]-L-cysteine + N(6)-ubiquitinyl-[acceptor protein]-L-lysine.. It participates in protein modification; protein ubiquitination. In terms of biological role, E3 ubiquitin ligase catalyzing the covalent attachment of ubiquitin moieties onto substrate proteins. This Xenopus laevis (African clawed frog) protein is Probable E3 ubiquitin-protein ligase makorin-1 (mkrn1).